A 232-amino-acid polypeptide reads, in one-letter code: Ribose-5-phosphate isomerase A (232 aa).

Substrate contacts are provided by residues 28-31 (TGST), 83-86 (DGAD), and 96-99 (KGGG). The active-site Proton acceptor is the glutamate 105. Lysine 123 serves as a coordination point for substrate.

Belongs to the ribose 5-phosphate isomerase family. As to quaternary structure, homodimer.

It carries out the reaction aldehydo-D-ribose 5-phosphate = D-ribulose 5-phosphate. The protein operates within carbohydrate degradation; pentose phosphate pathway; D-ribose 5-phosphate from D-ribulose 5-phosphate (non-oxidative stage): step 1/1. Catalyzes the reversible conversion of ribose-5-phosphate to ribulose 5-phosphate. This is Ribose-5-phosphate isomerase A from Rhodopseudomonas palustris (strain ATCC BAA-98 / CGA009).